Consider the following 226-residue polypeptide: ATP synthase F(0) complex subunit a (226 aa).

The next 6 helical transmembrane spans lie at 5-25 (LFAS…LIIL), 68-88 (WSLM…LGLL), 97-117 (QLSM…TTGF), 138-158 (IPML…ALAV), 160-180 (LTAN…ATLA), and 189-209 (TLII…VALI).

This sequence belongs to the ATPase A chain family. As to quaternary structure, component of the ATP synthase complex composed at least of ATP5F1A/subunit alpha, ATP5F1B/subunit beta, ATP5MC1/subunit c (homooctomer), MT-ATP6/subunit a, MT-ATP8/subunit 8, ATP5ME/subunit e, ATP5MF/subunit f, ATP5MG/subunit g, ATP5MK/subunit k, ATP5MJ/subunit j, ATP5F1C/subunit gamma, ATP5F1D/subunit delta, ATP5F1E/subunit epsilon, ATP5PF/subunit F6, ATP5PB/subunit b, ATP5PD/subunit d, ATP5PO/subunit OSCP. ATP synthase complex consists of a soluble F(1) head domain (subunits alpha(3) and beta(3)) - the catalytic core - and a membrane F(0) domain - the membrane proton channel (subunits c, a, 8, e, f, g, k and j). These two domains are linked by a central stalk (subunits gamma, delta, and epsilon) rotating inside the F1 region and a stationary peripheral stalk (subunits F6, b, d, and OSCP). Interacts with DNAJC30; interaction is direct.

The protein resides in the mitochondrion inner membrane. It catalyses the reaction H(+)(in) = H(+)(out). Its function is as follows. Subunit a, of the mitochondrial membrane ATP synthase complex (F(1)F(0) ATP synthase or Complex V) that produces ATP from ADP in the presence of a proton gradient across the membrane which is generated by electron transport complexes of the respiratory chain. ATP synthase complex consist of a soluble F(1) head domain - the catalytic core - and a membrane F(1) domain - the membrane proton channel. These two domains are linked by a central stalk rotating inside the F(1) region and a stationary peripheral stalk. During catalysis, ATP synthesis in the catalytic domain of F(1) is coupled via a rotary mechanism of the central stalk subunits to proton translocation. With the subunit c (ATP5MC1), forms the proton-conducting channel in the F(0) domain, that contains two crucial half-channels (inlet and outlet) that facilitate proton movement from the mitochondrial intermembrane space (IMS) into the matrix. Protons are taken up via the inlet half-channel and released through the outlet half-channel, following a Grotthuss mechanism. The sequence is that of ATP synthase F(0) complex subunit a from Gorilla gorilla gorilla (Western lowland gorilla).